The primary structure comprises 121 residues: Large ribosomal subunit protein uL14 (121 aa).

This sequence belongs to the universal ribosomal protein uL14 family. Part of the 50S ribosomal subunit. Forms a cluster with proteins L3 and L19. In the 70S ribosome, L14 and L19 interact and together make contacts with the 16S rRNA in bridges B5 and B8.

Binds to 23S rRNA. Forms part of two intersubunit bridges in the 70S ribosome. This Prochlorococcus marinus (strain NATL1A) protein is Large ribosomal subunit protein uL14.